Consider the following 321-residue polypeptide: Altered inheritance of mitochondria protein 18, mitochondrial (321 aa).

Residues 1-72 (MDRGRCANML…LLATSLYYRD (72 aa)) constitute a mitochondrion transit peptide.

The protein belongs to the AIM18/AIM46 family.

It is found in the mitochondrion. The sequence is that of Altered inheritance of mitochondria protein 18, mitochondrial (AIM18) from Saccharomyces cerevisiae (strain AWRI1631) (Baker's yeast).